The sequence spans 380 residues: Apolipoprotein A-IV (380 aa).

A signal peptide spans M1–A20. 13 consecutive repeat copies span residues D33–L54, T60–V81, P82–R103, P115–G136, P137–T158, P159–A180, P181–T202, P203–A224, P225–K246, K247–V268, P269–Q286, K287–G308, and P309–G330. A 13 X 22 AA approximate tandem repeats region spans residues D33–G330. Residues K361–G380 form a disordered region.

The protein belongs to the apolipoprotein A1/A4/E family. In terms of assembly, homodimer. Secreted in plasma.

It localises to the secreted. Functionally, may have a role in chylomicrons and VLDL secretion and catabolism. Required for efficient activation of lipoprotein lipase by ApoC-II; potent activator of LCAT. Apoa-IV is a major component of HDL and chylomicrons. The sequence is that of Apolipoprotein A-IV (APOA4) from Bos taurus (Bovine).